A 1604-amino-acid polypeptide reads, in one-letter code: Collagen alpha-1(XVI) chain (1604 aa).

Positions Met1–Gly21 are cleaved as a signal peptide. An N-linked (GlcNAc...) asparagine glycan is attached at Asn47. In terms of domain architecture, Laminin G-like spans Gly50–Pro231. The tract at residues Glu232–Glu374 is nonhelical region 10 (NC10). Basic and acidic residues predominate over residues Ala301–Thr311. The interval Ala301–Val509 is disordered. The N-linked (GlcNAc...) asparagine glycan is linked to Asn327. A Collagen-like 1 domain is found at Gly375–Gly423. Positions Gly375–Pro506 are triple-helical region 9 (COL9) with 3 imperfections. Residues Ser383–Glu397 are compositionally biased toward low complexity. Residues Lys398–Gly407 are compositionally biased toward basic and acidic residues. Residues Pro449–Ile460 are compositionally biased toward pro residues. Gly residues predominate over residues Gly486–Gly495. Residues Cys507–Val521 form a nonhelical region 9 (NC9) region. The tract at residues Gly522–Pro555 is triple-helical region 8 (COL8) with 1 imperfection. Positions Arg540–Asp542 match the Cell attachment site motif. A nonhelical region 8 (NC8) region spans residues Cys556–Thr572. A triple-helical region 7 (COL7) with 1 imperfection region spans residues Gly573–Pro631. Collagen-like domains are found at residues Gly573–Glu633 and Gly667–Gly721. A disordered region spans residues Phe604–Pro917. The interval Cys632–Pro652 is nonhelical region 7 (NC7). Residues Gly653 to Gly723 are triple-helical region 6 (COL6) with 1 imperfection. Positions Lys674–Lys684 are enriched in basic and acidic residues. The span at Asp686–Pro702 shows a compositional bias: low complexity. The nonhelical region 6 (NC6) stretch occupies residues Cys724–Ala738. Residues Gly739–Cys876 are triple-helical region 5 (COL5) with 3 imperfections. Composition is skewed to low complexity over residues Leu766–Glu781, Pro792–Pro808, and Pro826–Pro846. The 53-residue stretch at Gly788–Ala840 folds into the Collagen-like 4 domain. Over residues Lys864–Pro873 the composition is skewed to basic and acidic residues. A nonhelical region 5 (NC5) region spans residues Ser877 to Ser887. The Collagen-like 5 domain occupies Gly888–Leu938. The triple-helical region 4 (COL4) with 2 imperfections stretch occupies residues Gly888–Thr939. The span at Pro905–Pro917 shows a compositional bias: pro residues. Residues Ala940–Lys973 form a nonhelical region 4 (NC4) region. Residues Gly974–Asp988 are triple-helical region 3 (COL3). Residues Asn989–Glu1011 form a nonhelical region 3 (NC3) region. Disordered stretches follow at residues Arg1001–Ser1429 and Met1468–Lys1517. Residues Arg1006–Asp1008 carry the Cell attachment site motif. The triple-helical region 2 (COL2) with 2 imperfections stretch occupies residues Gly1012–Met1433. The Collagen-like 6 domain maps to Gly1018–Gly1075. Composition is skewed to pro residues over residues Pro1044 to Phe1055, Phe1160 to Phe1169, and Ser1199 to Ile1208. Residues Leu1217–Leu1226 show a composition bias toward basic and acidic residues. The Cell attachment site motif lies at Arg1227–Asp1229. A compositionally biased stretch (low complexity) spans Arg1271 to Gln1284. 2 stretches are compositionally biased toward pro residues: residues Arg1286–Pro1302 and Gln1330–Glu1342. Residues Asp1369–Gln1378 show a composition bias toward low complexity. Over residues Gly1386–Gly1395 the composition is skewed to gly residues. The span at Ser1420–Ser1429 shows a compositional bias: low complexity. Residues Val1434 to Pro1472 are nonhelical region 2 (NC2). 2 consecutive Collagen-like domains span residues Pro1472–Gly1524 and Ala1528–Gly1576. The interval Gly1473–Cys1578 is triple-helical region 1 (COL1) with 2 imperfections. The segment at Asn1579 to Gly1604 is nonhelical region 1 (NC1).

It belongs to the fibril-associated collagens with interrupted helices (FACIT) family. In terms of assembly, homotrimer. Interacts with FBN1, fibronectin and integrins ITGA1/ITGB1 and ITGA2/ITGB1. Integrin ITGA1/ITGB1 binds to a unique site within COL16A1 located close to its C-terminal end between collagenous domains COL1-COL3. Post-translationally, prolines at the third position of the tripeptide repeating unit (G-X-Y) are hydroxylated in some or all of the chains. In terms of processing, glycosylated. In terms of tissue distribution, in papillary dermis, is a component of specialized fibrillin-1-containing microfibrils, whereas in territorial cartilage matrix, it is localized to a discrete population of thin, weakly banded collagen fibrils in association with other collagens (at protein level). In the placenta, where it is found in the amnion, a membranous tissue lining the amniotic cavity. Within the amnion, it is found in an acellular, relatively dense layer of a complex network of reticular fibers. Also located to a fibroblast layer beneath this dense layer. Exists in tissues in association with other types of collagen.

The protein resides in the secreted. It localises to the extracellular space. The protein localises to the extracellular matrix. Involved in mediating cell attachment and inducing integrin-mediated cellular reactions, such as cell spreading and alterations in cell morphology. The protein is Collagen alpha-1(XVI) chain (COL16A1) of Homo sapiens (Human).